The following is an 81-amino-acid chain: Photosystem I iron-sulfur center (81 aa).

4Fe-4S ferredoxin-type domains lie at 2–31 (SHAV…MVPW) and 39–68 (IASS…IRVY). [4Fe-4S] cluster-binding residues include Cys11, Cys14, Cys17, Cys21, Cys48, Cys51, Cys54, and Cys58.

As to quaternary structure, the cyanobacterial PSI reaction center is composed of one copy each of PsaA,B,C,D,E,F,I,J,K,L,M and X, and forms trimeric complexes. The cofactor is [4Fe-4S] cluster.

It localises to the cellular thylakoid membrane. The catalysed reaction is reduced [plastocyanin] + hnu + oxidized [2Fe-2S]-[ferredoxin] = oxidized [plastocyanin] + reduced [2Fe-2S]-[ferredoxin]. Functionally, apoprotein for the two 4Fe-4S centers FA and FB of photosystem I (PSI); essential for photochemical activity. FB is the terminal electron acceptor of PSI, donating electrons to ferredoxin. The C-terminus interacts with PsaA/B/D and helps assemble the protein into the PSI complex. Required for binding of PsaD and PsaE to PSI. PSI is a plastocyanin/cytochrome c6-ferredoxin oxidoreductase, converting photonic excitation into a charge separation, which transfers an electron from the donor P700 chlorophyll pair to the spectroscopically characterized acceptors A0, A1, FX, FA and FB in turn. The chain is Photosystem I iron-sulfur center from Prochlorococcus marinus (strain NATL2A).